A 169-amino-acid polypeptide reads, in one-letter code: Ribosome maturation factor RimM (169 aa).

In terms of domain architecture, PRC barrel spans 94 to 168; the sequence is DDEFYHADLI…RIVADPPEGL (75 aa).

This sequence belongs to the RimM family. In terms of assembly, binds ribosomal protein uS19.

It localises to the cytoplasm. Functionally, an accessory protein needed during the final step in the assembly of 30S ribosomal subunit, possibly for assembly of the head region. Essential for efficient processing of 16S rRNA. May be needed both before and after RbfA during the maturation of 16S rRNA. It has affinity for free ribosomal 30S subunits but not for 70S ribosomes. The chain is Ribosome maturation factor RimM from Cereibacter sphaeroides (strain ATCC 17025 / ATH 2.4.3) (Rhodobacter sphaeroides).